Consider the following 215-residue polypeptide: Peroxiredoxin 1 (215 aa).

Residues methionine 1–valine 157 enclose the Thioredoxin domain. Cysteine 45 functions as the Cysteine sulfenic acid (-SOH) intermediate in the catalytic mechanism. A substrate-binding site is contributed by arginine 120.

Belongs to the peroxiredoxin family. Prx6 subfamily. In terms of assembly, homodecamer. Pentamer of dimers that assemble into a ring structure.

The protein resides in the cytoplasm. The catalysed reaction is a hydroperoxide + [thioredoxin]-dithiol = an alcohol + [thioredoxin]-disulfide + H2O. In terms of biological role, thiol-specific peroxidase that catalyzes the reduction of hydrogen peroxide and organic hydroperoxides to water and alcohols, respectively. Plays a role in cell protection against oxidative stress by detoxifying peroxides. This Sulfuracidifex metallicus (Sulfolobus metallicus) protein is Peroxiredoxin 1.